The chain runs to 1580 residues: Collagen alpha-1(XVI) chain (1580 aa).

The N-terminal stretch at 1-21 (MLTSWAPGLWVLGLWATFSHG) is a signal peptide. N-linked (GlcNAc...) asparagine glycosylation occurs at asparagine 47. Positions 50–231 (GFNLIRRLNL…LQQAHIYCDP (182 aa)) constitute a Laminin G-like domain. The tract at residues 232-374 (ELVLEEGCCE…SPDAPLQCVE (143 aa)) is nonhelical region 10 (NC10). Residues 324-547 (RESNVTLGPS…DPAPAWEGLG (224 aa)) form a disordered region. Asparagine 327 carries an N-linked (GlcNAc...) asparagine glycan. The 50-residue stretch at 375 to 424 (GPKGEKGESGDLGPPGLPGPTGQKGQKGEKGDGGLKGLPGKPGRDGRPGE) folds into the Collagen-like 1 domain. Residues 375–509 (GPKGEKGESG…PGTKGEKGDP (135 aa)) are triple-helical region 9 (COL9) with 3 imperfections. A compositionally biased stretch (pro residues) spans 449 to 460 (PGPPGLPGPPGI). Positions 486-495 (GKEGPGGKPG) are enriched in gly residues. Residues 510–524 (CEVCPTLPEGSQNFV) form a nonhelical region 9 (NC9) region. The tract at residues 525–570 (GLPGKPGPKGEPGDPAPAWEGLGTVGLKGDRGDPGIQGMKGEKGEP) is triple-helical region 8 (COL8) with 1 imperfection. Residues 555-557 (RGD) carry the Cell attachment site motif. A nonhelical region 8 (NC8) region spans residues 571–586 (CSSCSSGVGAQHLGPS). A compositionally biased stretch (low complexity) spans 585 to 598 (PSPGHGLPGLPGTS). Residues 585-935 (PSPGHGLPGL…LPGQPGLTAE (351 aa)) are disordered. The triple-helical region 7 (COL7) with 1 imperfection stretch occupies residues 587-640 (PGHGLPGLPGTSGIPGPRGLKGEKGSFGDTGPAGVPGSPGPVGPAGIKGAKGEP). 2 consecutive Collagen-like domains span residues 590–643 (GLPG…PCEP) and 676–725 (GLPG…PAGP). The segment at 641-661 (CEPCTALSELQDGDMRVVHLP) is nonhelical region 7 (NC7). The interval 662-732 (GPAGEKGEPG…AGPKGEKGDG (71 aa)) is triple-helical region 6 (COL6) with 1 imperfection. The span at 683-693 (KAGERGLKGQK) shows a compositional bias: basic and acidic residues. Over residues 698–714 (NPGDPGTPGITGQPGIS) the composition is skewed to low complexity. Residues 733-747 (CTACPSLQGALTDVS) are nonhelical region 6 (NC6). The tract at residues 748–870 (GLPGKPGPKG…RGEKGEPGEC (123 aa)) is triple-helical region 5 (COL5) with 3 imperfections. A Collagen-like 4 domain is found at 797–848 (GAEGPQGEPGTQGLPGTQGLPGPRGPPGSAGEKGAQGSPGPKGAIGPMGPPG). Residues 801 to 817 (PQGEPGTQGLPGTQGLP) show a composition bias toward low complexity. The tract at residues 871-881 (SCPSRGEPIFS) is nonhelical region 5 (NC5). The triple-helical region 4 (COL4) with 2 imperfections stretch occupies residues 882 to 933 (GMPGAPGLWMGSSSQPGPQGPPGVPGPPGPPGMPGLQGVPGHNGLPGQPGLT). Positions 899–914 (PQGPPGVPGPPGPPGM) are enriched in pro residues. A nonhelical region 4 (NC4) region spans residues 934–967 (AELGSLPIEKHLLKSICGDCAQGQTAHPAFLLEK). The interval 968-982 (GEKGDQGIPGVPGFD) is triple-helical region 3 (COL3). The segment at 983–1005 (NCARCFIERERPRAEEARGDNSE) is nonhelical region 3 (NC3). Disordered stretches follow at residues 995–1405 (RAEE…LPGS) and 1445–1523 (AAAP…GYGK). The short motif at 1000–1002 (RGD) is the Cell attachment site element. Positions 1006-1063 (GEPGCSGSPGLPGPPGMPGQRGEEGPPGMRGSPGPPGPIGLQGERGLTGLTGDKGEPG) constitute a Collagen-like 5 domain. Positions 1006 to 1409 (GEPGCSGSPG…PGLPGSMGDM (404 aa)) are triple-helical region 2 (COL2) with 2 imperfections. Residues 1098 to 1107 (SGPPGSEGLP) show a composition bias toward low complexity. Composition is skewed to pro residues over residues 1139–1148 (FPGPPGPPGF) and 1178–1187 (SPGPPGPPGI). Positions 1196–1205 (LDGKDGKPGL) are enriched in basic and acidic residues. Positions 1206–1208 (RGD) match the Cell attachment site motif. The 54-residue stretch at 1210-1263 (GPAGPPGLMGPPGFKGKTGHPGLPGPKGDCGKPGPPGSSGRPGAEGEPGAMGPQ) folds into the Collagen-like 6 domain. Residues 1247–1263 (SSGRPGAEGEPGAMGPQ) show a composition bias toward low complexity. Residues 1265–1281 (RPGPPGHLGPPGQPGPP) show a composition bias toward pro residues. Collagen-like domains follow at residues 1350–1407 (GQKG…GSMG), 1448–1500 (PGRP…GDIG), and 1504–1552 (AGEN…GKAG). Residues 1362–1371 (GMPGGPGKSG) show a composition bias toward gly residues. The span at 1396–1405 (NPGLPGLPGS) shows a compositional bias: low complexity. Residues 1410–1448 (VNYDDIKRFIRQEIIKLFDERMAYYTSRMQFPMEVAAAP) form a nonhelical region 2 (NC2) region. The tract at residues 1449 to 1554 (GRPGPPGKDG…MGQPGKAGHC (106 aa)) is triple-helical region 1 (COL1) with 2 imperfections. Residues 1555 to 1580 (NPSDCFGAMPMEQQYPPMKSMKGPFG) are nonhelical region 1 (NC1).

This sequence belongs to the fibril-associated collagens with interrupted helices (FACIT) family. As to quaternary structure, homotrimer. Interacts with FBN1, fibronectin and integrins ITGA1/ITGB1 and ITGA2/ITGB1. Integrin ITGA1/ITGB1 binds to a unique site within COL16A1 located close to its C-terminal end between collagenous domains COL1-COL3. Prolines at the third position of the tripeptide repeating unit (G-X-Y) are hydroxylated in some or all of the chains. Post-translationally, glycosylated. In terms of tissue distribution, expressed in most tissues examined with highest levels of expression observed in heart. Strongly expressed in cortical and medullar regions of kidney and more weakly expressed in lung. Also detected in the ciliary muscle of the eye, on the serosa layer lining the muscularis externa of intestinal tissue, and in the perimysium membrane lining both the cardiac muscle bundle and the smooth muscle tissue of the small intestine. Strongly stained in particulate or granular structures. Not detected in brain or skeletal muscle.

Its subcellular location is the secreted. It is found in the extracellular space. The protein localises to the extracellular matrix. Its function is as follows. Involved in mediating cell attachment and inducing integrin-mediated cellular reactions, such as cell spreading and alterations in cell morphology. In Mus musculus (Mouse), this protein is Collagen alpha-1(XVI) chain.